Here is a 248-residue protein sequence, read N- to C-terminus: Mannose-binding protein C (248 aa).

A signal peptide spans 1-20 (MSLFPSLPLLLLSMVAASYS). The Collagen-like domain maps to 42–99 (GINGFPGKDGRDGTKGEKGEPGQGLRGLQGPPGKLGPPGNPGPSGSPGAKGQKGDPGA). The interval 43 to 112 (INGFPGKDGR…CDSSLANPER (70 aa)) is disordered. P47 carries the post-translational modification 4-hydroxyproline. Positions 49 to 61 (KDGRDGTKGEKGE) are enriched in basic and acidic residues. A 4-hydroxyproline mark is found at P73, P79, P82, and P88. The stretch at 112–130 (RKTLQTEINRIKKWVTFSL) forms a coiled coil. The C-type lectin domain maps to 134-245 (VGKKLFLTNG…CSSSHLVICE (112 aa)). 2 disulfides stabilise this stretch: C155–C244 and C222–C236.

As to quaternary structure, oligomeric complex of 3 or more homotrimers. Interacts with MASP1 and MASP2. Interacts with MEP1A and MEP1B and may inhibit their catalytic activity. Hydroxylation on proline residues within the sequence motif, GXPG, is most likely to be 4-hydroxy as this fits the requirement for 4-hydroxylation in vertebrates.

The protein localises to the secreted. Its function is as follows. Calcium-dependent lectin involved in innate immune defense. Binds mannose, fucose and N-acetylglucosamine on different microorganisms and activates the lectin complement pathway. Binds to late apoptotic cells, as well as to apoptotic blebs and to necrotic cells, but not to early apoptotic cells, facilitating their uptake by macrophages. This chain is Mannose-binding protein C (MBL2), found in Callithrix jacchus (White-tufted-ear marmoset).